Here is an 849-residue protein sequence, read N- to C-terminus: Lysine-specific histone demethylase 1 homolog 1 (849 aa).

Residues 1–118 (MEEGSEAQPP…RRRRKKQFPG (118 aa)) form a disordered region. Low complexity-rich tracts occupy residues 34-67 (GQAA…AADA) and 89-103 (PTSS…VDDS). Positions 106 to 115 (ARKRRRRKKQ) are enriched in basic residues. Residues 159 to 260 (ARELDAEALI…FGLAPSVISL (102 aa)) enclose the SWIRM domain. FAD is bound by residues Glu300, Arg302, Arg308, and Glu688.

The protein belongs to the flavin monoamine oxidase family. Requires FAD as cofactor.

Its function is as follows. Probable histone demethylase. In Oryza sativa subsp. japonica (Rice), this protein is Lysine-specific histone demethylase 1 homolog 1.